Consider the following 696-residue polypeptide: Polyribonucleotide nucleotidyltransferase (696 aa).

Mg(2+) contacts are provided by D489 and D495. A KH domain is found at 556 to 615 (PQYVTMKINPEKIRDVIGKGGVVIREITEATNCAIDISDDGTIKIAAHTTEEGEAAKRRI). Residues 625-693 (GKVYEGTVVK…RQGRVRLSMK (69 aa)) form the S1 motif domain.

The protein belongs to the polyribonucleotide nucleotidyltransferase family. In terms of assembly, component of the RNA degradosome, which is a multiprotein complex involved in RNA processing and mRNA degradation. Mg(2+) serves as cofactor.

It is found in the cytoplasm. It carries out the reaction RNA(n+1) + phosphate = RNA(n) + a ribonucleoside 5'-diphosphate. In terms of biological role, involved in mRNA degradation. Catalyzes the phosphorolysis of single-stranded polyribonucleotides processively in the 3'- to 5'-direction. The protein is Polyribonucleotide nucleotidyltransferase of Coxiella burnetii (strain CbuK_Q154) (Coxiella burnetii (strain Q154)).